Reading from the N-terminus, the 243-residue chain is Sec-independent protein translocase protein TatC (243 aa).

7 helical membrane-spanning segments follow: residues 18–38, 70–90, 106–126, 132–152, 153–173, 191–211, and 213–233; these read VIII…NYVD, IAII…IWSF, MIPV…FTVF, FLLQ…KYIS, FALN…VVYI, YALL…DVIS, and LLMA…AKFI.

This sequence belongs to the TatC family. As to quaternary structure, forms a complex with TatA.

Its subcellular location is the cell membrane. In terms of biological role, part of the twin-arginine translocation (Tat) system that transports large folded proteins containing a characteristic twin-arginine motif in their signal peptide across membranes. The polypeptide is Sec-independent protein translocase protein TatC (Carboxydothermus hydrogenoformans (strain ATCC BAA-161 / DSM 6008 / Z-2901)).